Reading from the N-terminus, the 83-residue chain is Small ribosomal subunit protein bS16 (83 aa).

It belongs to the bacterial ribosomal protein bS16 family.

This chain is Small ribosomal subunit protein bS16, found in Pseudomonas entomophila (strain L48).